Consider the following 263-residue polypeptide: Phosphatidylglycerol--prolipoprotein diacylglyceryl transferase (263 aa).

The next 4 membrane-spanning stretches (helical) occupy residues 15–35 (ISIH…VYLA), 52–72 (FILL…VIFQ), 83–103 (IFAI…GAAV), and 112–132 (AIAV…AQSI). Arg134 contributes to the a 1,2-diacyl-sn-glycero-3-phospho-(1'-sn-glycerol) binding site. 3 helical membrane passes run 170–190 (VPTF…ILGL), 200–220 (GDVT…IEGM), and 227–247 (FVGL…GAVL).

This sequence belongs to the Lgt family.

The protein localises to the cell membrane. It carries out the reaction L-cysteinyl-[prolipoprotein] + a 1,2-diacyl-sn-glycero-3-phospho-(1'-sn-glycerol) = an S-1,2-diacyl-sn-glyceryl-L-cysteinyl-[prolipoprotein] + sn-glycerol 1-phosphate + H(+). It functions in the pathway protein modification; lipoprotein biosynthesis (diacylglyceryl transfer). Its function is as follows. Catalyzes the transfer of the diacylglyceryl group from phosphatidylglycerol to the sulfhydryl group of the N-terminal cysteine of a prolipoprotein, the first step in the formation of mature lipoproteins. The chain is Phosphatidylglycerol--prolipoprotein diacylglyceryl transferase from Streptococcus thermophilus (strain CNRZ 1066).